The following is a 452-amino-acid chain: Friend leukemia integration 1 transcription factor (452 aa).

Residue Ser39 is modified to Phosphoserine. Positions Pro112–Ser198 constitute a PNT domain. The tract at residues Asp209 to Ser271 is disordered. Over residues Ser215–Arg226 the composition is skewed to basic and acidic residues. Residues Gln248–Arg257 are compositionally biased toward polar residues. Residues Ile281 to Asp361 constitute a DNA-binding region (ETS). The interval Asn433 to Tyr452 is disordered.

Belongs to the ETS family. As to quaternary structure, can form homodimers or heterodimers with ETV6/TEL1.

Its subcellular location is the nucleus. Functionally, sequence-specific transcriptional activator. Recognizes the DNA sequence 5'-C[CA]GGAAGT-3'. This chain is Friend leukemia integration 1 transcription factor (FLI1), found in Homo sapiens (Human).